We begin with the raw amino-acid sequence, 207 residues long: Glutathione S-transferase 4 (207 aa).

The 78-residue stretch at 2–79 (PNYKLLYFDA…YLARKFGLAG (78 aa)) folds into the GST N-terminal domain. Residues Tyr-8, Trp-39, Lys-43, 49–51 (GQL), and 63–64 (QS) each bind glutathione. The 127-residue stretch at 81–207 (TAEEEAYADS…YVATRKDSIV (127 aa)) folds into the GST C-terminal domain.

Belongs to the GST superfamily. Sigma family.

It catalyses the reaction RX + glutathione = an S-substituted glutathione + a halide anion + H(+). Functionally, conjugation of reduced glutathione to a wide number of exogenous and endogenous hydrophobic electrophiles. May play a role in the detoxification of reactive oxygen species produced during pathogenic bacterial infection. The protein is Glutathione S-transferase 4 of Caenorhabditis elegans.